A 135-amino-acid polypeptide reads, in one-letter code: Ribosome-binding factor A (135 aa).

The protein belongs to the RbfA family. Monomer. Binds 30S ribosomal subunits, but not 50S ribosomal subunits or 70S ribosomes.

It localises to the cytoplasm. One of several proteins that assist in the late maturation steps of the functional core of the 30S ribosomal subunit. Associates with free 30S ribosomal subunits (but not with 30S subunits that are part of 70S ribosomes or polysomes). Required for efficient processing of 16S rRNA. May interact with the 5'-terminal helix region of 16S rRNA. This is Ribosome-binding factor A from Sinorhizobium fredii (strain NBRC 101917 / NGR234).